The chain runs to 333 residues: Phosphate acyltransferase (333 aa).

It belongs to the PlsX family. As to quaternary structure, homodimer. Probably interacts with PlsY.

The protein localises to the cytoplasm. It carries out the reaction a fatty acyl-[ACP] + phosphate = an acyl phosphate + holo-[ACP]. It participates in lipid metabolism; phospholipid metabolism. Its function is as follows. Catalyzes the reversible formation of acyl-phosphate (acyl-PO(4)) from acyl-[acyl-carrier-protein] (acyl-ACP). This enzyme utilizes acyl-ACP as fatty acyl donor, but not acyl-CoA. This is Phosphate acyltransferase from Lactobacillus helveticus (strain DPC 4571).